Reading from the N-terminus, the 116-residue chain is Large ribosomal subunit protein bL20 (116 aa).

This sequence belongs to the bacterial ribosomal protein bL20 family.

Its function is as follows. Binds directly to 23S ribosomal RNA and is necessary for the in vitro assembly process of the 50S ribosomal subunit. It is not involved in the protein synthesizing functions of that subunit. The sequence is that of Large ribosomal subunit protein bL20 from Helicobacter pylori (strain Shi470).